We begin with the raw amino-acid sequence, 325 residues long: Heat-inducible transcription repressor HrcA (325 aa).

This sequence belongs to the HrcA family.

Its function is as follows. Negative regulator of class I heat shock genes (grpE-dnaK-dnaJ and groELS operons). Prevents heat-shock induction of these operons. In Staphylococcus aureus (strain MRSA252), this protein is Heat-inducible transcription repressor HrcA.